The sequence spans 346 residues: Guanine nucleotide-binding protein subunit beta-2 (346 aa).

WD repeat units lie at residues 57 to 96, 99 to 138, 147 to 185, 188 to 227, 230 to 269, 274 to 313, and 316 to 346; these read GHINKVNSVHFAGDSRHCVTGSLDGKLIIWDTWTANKVQV, LRSAWVMTVAFSPSGNFVACGGMDNQCTVYDVNNRDASGV, GYEGFLSSCRFLDDTHLITGSGDMKICHWDLEKGVKTMD, GHAGDIAGLSLSPDMNTYITGSVDKTAKLWDVREETHKQM, GHEMDVNSVCYHPSGNGFASASEDQTARLYDIRADQQIAL, QKNTGFTSCALSTSGRYLLCSGIEGNIHSFDTMKVCHNGM, and GHENRITCISLSPNGMCLASTSWDQQVRLWL.

Belongs to the WD repeat G protein beta family. In terms of assembly, g proteins are composed of 3 units, alpha, beta and gamma. Interacts with Ggammae/Guanine nucleotide-binding protein subunit gamma-e.

In terms of biological role, guanine nucleotide-binding proteins (G proteins) are involved as modulators or transducers in various transmembrane signaling systems. The beta and gamma chains are required for the GTPase activity, for replacement of GDP by GTP, and for G protein-effector interaction. This Calliphora vicina (Blue blowfly) protein is Guanine nucleotide-binding protein subunit beta-2.